Consider the following 84-residue polypeptide: Putative membrane protein insertion efficiency factor (84 aa).

A disordered region spans residues 63–84 (GEDPVPNHFTLRRNKKEKPSKS).

The protein belongs to the UPF0161 family.

Its subcellular location is the cell membrane. In terms of biological role, could be involved in insertion of integral membrane proteins into the membrane. The sequence is that of Putative membrane protein insertion efficiency factor from Streptococcus mutans serotype c (strain ATCC 700610 / UA159).